A 372-amino-acid polypeptide reads, in one-letter code: Aminomethyltransferase (372 aa).

Belongs to the GcvT family. In terms of assembly, the glycine cleavage system is composed of four proteins: P, T, L and H.

The catalysed reaction is N(6)-[(R)-S(8)-aminomethyldihydrolipoyl]-L-lysyl-[protein] + (6S)-5,6,7,8-tetrahydrofolate = N(6)-[(R)-dihydrolipoyl]-L-lysyl-[protein] + (6R)-5,10-methylene-5,6,7,8-tetrahydrofolate + NH4(+). The glycine cleavage system catalyzes the degradation of glycine. The chain is Aminomethyltransferase from Burkholderia mallei (strain NCTC 10247).